Consider the following 442-residue polypeptide: MKKFFQEIKADIKFKSAGPGQKLTDSAGEKTTKGKSPQLALRQPRQGPTDEAQMAAAAALARLEQKQPRARGPTSQDSIRNQVRKELQAEATSSNNPGAPGTNSVPEPKEEISPHLAVPGVFFICPLTGVTLRRDQRDAHIKQAILSHFSTDPVAASIMKIHTFNRDRDRVKLGVDTIAKYLDNIHLHPEEEKYQKIKLQNKVFQERINCLEGSHEFFEAIGFKKVTLPVPDQEGQEEFYVLGEDARAQPQNLARHKQQLLDAEPVRATLDRQLRVFRPSALASHFELPSDFFSLTAEEVKREQRLRTEAVERLSSLRTKAMREKEEQRELRKYTYALVRVRLPDGCLLQGTFYAREKLSALFRFVREALQNDWLPFELRASGGQKLEENEALALNECGLVPSALLTFSWDASVLEDIRAAGAEPAKSVLRPELLAAIEQLS.

The tract at residues 1-10 (MKKFFQEIKA) is mediates interaction with LMAN1. The segment at 13–111 (KFKSAGPGQK…TNSVPEPKEE (99 aa)) is disordered. Phosphoserine is present on Ser36. Residues 51–63 (EAQMAAAAALARL) form a VCP/p97-interacting motif (VIM) region. Residues 52–61 (AQMAAAAALA) are compositionally biased toward low complexity. A compositionally biased stretch (polar residues) spans 90–105 (EATSSNNPGAPGTNSV). Residues 175–244 (VDTIAKYLDN…GQEEFYVLGE (70 aa)) enclose the PUB domain. One can recognise a UBX domain in the interval 332–408 (RKYTYALVRV…GLVPSALLTF (77 aa)).

Interacts with VCP through the PUB domain (via C-terminus) and VIM motif (via N-terminus); the interaction is direct. Forms a ternary complex with CAV1 and VCP. Interacts with SYVN1. Interacts with HERPUD1. Interacts with VCPKMT. May interact with DERL1. Interacts with PLAA, VCP and YOD1; may form a complex involved in macroautophagy. Interacts with LMAN1. As to expression, widely expressed (at protein level). Highest expression in brain (at protein level).

It is found in the cytoplasm. It localises to the cytosol. Its subcellular location is the membrane. The protein localises to the nucleus. The protein resides in the cytoskeleton. It is found in the microtubule organizing center. It localises to the centrosome. Its subcellular location is the early endosome membrane. The protein localises to the late endosome membrane. The protein resides in the lysosome membrane. May negatively regulate the ATPase activity of VCP, an ATP-driven segregase that associates with different cofactors to control a wide variety of cellular processes. As a cofactor of VCP, it may play a role in the transport of CAV1 to lysosomes for degradation. It may also play a role in endoplasmic reticulum-associated degradation (ERAD) of misfolded proteins. Together with VCP and other cofactors, it may play a role in macroautophagy, regulating for instance the clearance of damaged lysosomes. The chain is UBX domain-containing protein 6 from Mus musculus (Mouse).